The sequence spans 230 residues: Extracellular ribonuclease LE (230 aa).

Positions Met1–Ala25 are cleaved as a signal peptide. Residue Gln37 participates in RNA binding. 5 disulfide bridges follow: Cys43–Cys49, Cys50–Cys106, Cys79–Cys125, Cys186–Cys221, and Cys202–Cys213. RNA is bound by residues His64, Phe114, His117–Glu118, and Lys121–His122. His64 serves as the catalytic Proton donor. Glu118 is a catalytic residue. His122 serves as the catalytic Proton acceptor.

Belongs to the RNase T2 family.

Its subcellular location is the secreted. The protein resides in the extracellular space. It localises to the cell wall. The catalysed reaction is a ribonucleotidyl-ribonucleotide-RNA + H2O = a 3'-end 3'-phospho-ribonucleotide-RNA + a 5'-end dephospho-ribonucleoside-RNA + H(+). Functionally, probably involved in plant phosphate-starvation rescue system. The chain is Extracellular ribonuclease LE from Solanum lycopersicum (Tomato).